A 95-amino-acid chain; its full sequence is High mobility group nucleosome-binding domain-containing protein 3 (95 aa).

Composition is skewed to basic and acidic residues over residues 1–25, 39–53, and 62–72; these read MPKR…EPTR, PEPK…KEPG, and GKKEEKQEAGK. The interval 1–95 is disordered; sequence MPKRKSPENA…EEVLSTNASH (95 aa). Serine 6 is modified (phosphoserine). Serine 78 bears the Phosphoserine mark.

This sequence belongs to the HMGN family. As to quaternary structure, interacts with the ligand binding domain of the thyroid receptor (TR) (in vitro). Requires the presence of thyroid hormone for its interaction. Interacts with transcriptional regulator SEHBP. Interacts with nucleosomes.

It is found in the nucleus. Binds to nucleosomes, regulating chromatin structure and consequently, chromatin-dependent processes such as transcription, DNA replication and DNA repair. Affects both insulin and glucagon levels and modulates the expression of pancreatic genes involved in insulin secretion. Regulates the expression of the glucose transporter SLC2A2 by binding specifically to its promoter region and recruiting PDX1 and additional transcription factors. Regulates the expression of SLC6A9, a glycine transporter which regulates the glycine concentration in synaptic junctions in the central nervous system, by binding to its transcription start site. May play a role in ocular development and astrocyte function. The chain is High mobility group nucleosome-binding domain-containing protein 3 (Hmgn3) from Rattus norvegicus (Rat).